Reading from the N-terminus, the 356-residue chain is Dual-specificity RNA methyltransferase RlmN (356 aa).

E92 (proton acceptor) is an active-site residue. The Radical SAM core domain maps to 98 to 334; sequence EKDRGTLCIS…MRRTRGEDID (237 aa). C105 and C337 are disulfide-bonded. C112, C116, and C119 together coordinate [4Fe-4S] cluster. S-adenosyl-L-methionine is bound by residues 162–163, S194, 216–218, and N294; these read GE and SLH. C337 functions as the S-methylcysteine intermediate in the catalytic mechanism.

Belongs to the radical SAM superfamily. RlmN family. [4Fe-4S] cluster serves as cofactor.

The protein resides in the cytoplasm. The catalysed reaction is adenosine(2503) in 23S rRNA + 2 reduced [2Fe-2S]-[ferredoxin] + 2 S-adenosyl-L-methionine = 2-methyladenosine(2503) in 23S rRNA + 5'-deoxyadenosine + L-methionine + 2 oxidized [2Fe-2S]-[ferredoxin] + S-adenosyl-L-homocysteine. The enzyme catalyses adenosine(37) in tRNA + 2 reduced [2Fe-2S]-[ferredoxin] + 2 S-adenosyl-L-methionine = 2-methyladenosine(37) in tRNA + 5'-deoxyadenosine + L-methionine + 2 oxidized [2Fe-2S]-[ferredoxin] + S-adenosyl-L-homocysteine. Specifically methylates position 2 of adenine 2503 in 23S rRNA and position 2 of adenine 37 in tRNAs. m2A2503 modification seems to play a crucial role in the proofreading step occurring at the peptidyl transferase center and thus would serve to optimize ribosomal fidelity. The protein is Dual-specificity RNA methyltransferase RlmN of Vesicomyosocius okutanii subsp. Calyptogena okutanii (strain HA).